The primary structure comprises 339 residues: UDP-N-acetylglucosamine--N-acetylmuramyl-(pentapeptide) pyrophosphoryl-undecaprenol N-acetylglucosamine transferase (339 aa).

UDP-N-acetyl-alpha-D-glucosamine-binding positions include Thr11–Gly13, Asn127, Arg170, Ser188, Ile235, and Gln280.

The protein belongs to the glycosyltransferase 28 family. MurG subfamily.

It localises to the cell inner membrane. The catalysed reaction is di-trans,octa-cis-undecaprenyl diphospho-N-acetyl-alpha-D-muramoyl-L-alanyl-D-glutamyl-meso-2,6-diaminopimeloyl-D-alanyl-D-alanine + UDP-N-acetyl-alpha-D-glucosamine = di-trans,octa-cis-undecaprenyl diphospho-[N-acetyl-alpha-D-glucosaminyl-(1-&gt;4)]-N-acetyl-alpha-D-muramoyl-L-alanyl-D-glutamyl-meso-2,6-diaminopimeloyl-D-alanyl-D-alanine + UDP + H(+). Its pathway is cell wall biogenesis; peptidoglycan biosynthesis. In terms of biological role, cell wall formation. Catalyzes the transfer of a GlcNAc subunit on undecaprenyl-pyrophosphoryl-MurNAc-pentapeptide (lipid intermediate I) to form undecaprenyl-pyrophosphoryl-MurNAc-(pentapeptide)GlcNAc (lipid intermediate II). This chain is UDP-N-acetylglucosamine--N-acetylmuramyl-(pentapeptide) pyrophosphoryl-undecaprenol N-acetylglucosamine transferase, found in Thermotoga petrophila (strain ATCC BAA-488 / DSM 13995 / JCM 10881 / RKU-1).